Consider the following 192-residue polypeptide: Ion-translocating oxidoreductase complex subunit A (192 aa).

The next 6 helical transmembrane spans lie at 5–25 (LLLL…FLGL), 39–59 (IGMS…SYLV), 65–85 (LPFD…AVVV), 102–122 (ALGI…VALL), 134–154 (AIFG…FSAM), and 171–191 (AIAM…TGLV).

It belongs to the NqrDE/RnfAE family. The complex is composed of six subunits: RnfA, RnfB, RnfC, RnfD, RnfE and RnfG.

The protein localises to the cell inner membrane. Functionally, part of a membrane-bound complex that couples electron transfer with translocation of ions across the membrane. The sequence is that of Ion-translocating oxidoreductase complex subunit A from Shewanella pealeana (strain ATCC 700345 / ANG-SQ1).